The chain runs to 141 residues: Putative antiporter subunit mnhB2 (141 aa).

Helical transmembrane passes span 10–30, 35–55, 70–90, and 114–134; these read TVTKLVVFILLTFGFYVFFAG, GGGFIGGLIFSSAFILMFLAF, ILMIIGALVSSITAIIPMFFG, and ITLFELGILFSVVGVIVTVML.

It belongs to the CPA3 antiporters (TC 2.A.63) subunit B family. As to quaternary structure, may form a heterooligomeric complex that consists of seven subunits: mnhA2, mnhB2, mnhC2, mnhD2, mnhE2, mnhF2 and mnhG2.

It is found in the cell membrane. This Staphylococcus aureus (strain Mu3 / ATCC 700698) protein is Putative antiporter subunit mnhB2 (mnhB2).